The sequence spans 620 residues: Methionine--tRNA ligase (620 aa).

Residues 11–21 carry the 'HIGH' region motif; that stretch reads PYANGPRHIGH. Cysteine 143, cysteine 146, cysteine 156, and cysteine 159 together coordinate Zn(2+). A 'KMSKS' region motif is present at residues 347–351; sequence KFSSS. Serine 350 is an ATP binding site.

This sequence belongs to the class-I aminoacyl-tRNA synthetase family. MetG type 1 subfamily. In terms of assembly, monomer. Requires Zn(2+) as cofactor.

Its subcellular location is the cytoplasm. The catalysed reaction is tRNA(Met) + L-methionine + ATP = L-methionyl-tRNA(Met) + AMP + diphosphate. In terms of biological role, is required not only for elongation of protein synthesis but also for the initiation of all mRNA translation through initiator tRNA(fMet) aminoacylation. The protein is Methionine--tRNA ligase of Bifidobacterium adolescentis (strain ATCC 15703 / DSM 20083 / NCTC 11814 / E194a).